Here is a 217-residue protein sequence, read N- to C-terminus: Probable transaldolase (217 aa).

Residue Lys83 is the Schiff-base intermediate with substrate of the active site.

It belongs to the transaldolase family. Type 3B subfamily.

The protein localises to the cytoplasm. It catalyses the reaction D-sedoheptulose 7-phosphate + D-glyceraldehyde 3-phosphate = D-erythrose 4-phosphate + beta-D-fructose 6-phosphate. It functions in the pathway carbohydrate degradation; pentose phosphate pathway; D-glyceraldehyde 3-phosphate and beta-D-fructose 6-phosphate from D-ribose 5-phosphate and D-xylulose 5-phosphate (non-oxidative stage): step 2/3. Transaldolase is important for the balance of metabolites in the pentose-phosphate pathway. The sequence is that of Probable transaldolase from Maricaulis maris (strain MCS10) (Caulobacter maris).